The chain runs to 51 residues: MARYRCRRSQSRSRCCRQRRRCRRRRRQRFRARKRAMRCCHRRYRLRCRRY.

This sequence belongs to the protamine P1 family. As to expression, testis.

It is found in the nucleus. Its subcellular location is the chromosome. Its function is as follows. Protamines substitute for histones in the chromatin of sperm during the haploid phase of spermatogenesis. They compact sperm DNA into a highly condensed, stable and inactive complex. The sequence is that of Sperm protamine P1 (PRM1) from Colobus guereza (Mantled guereza).